Here is a 335-residue protein sequence, read N- to C-terminus: Methionine import ATP-binding protein MetN 2 (335 aa).

Residues 2–242 form the ABC transporter domain; the sequence is IEFHDVHKTY…PQHPTTRRFV (241 aa). Residue 38-45 coordinates ATP; it reads GHSGAGKS.

It belongs to the ABC transporter superfamily. Methionine importer (TC 3.A.1.24) family. In terms of assembly, the complex is composed of two ATP-binding proteins (MetN), two transmembrane proteins (MetI) and a solute-binding protein (MetQ).

The protein resides in the cell inner membrane. It carries out the reaction L-methionine(out) + ATP + H2O = L-methionine(in) + ADP + phosphate + H(+). The enzyme catalyses D-methionine(out) + ATP + H2O = D-methionine(in) + ADP + phosphate + H(+). Functionally, part of the ABC transporter complex MetNIQ involved in methionine import. Responsible for energy coupling to the transport system. This is Methionine import ATP-binding protein MetN 2 from Pseudomonas aeruginosa (strain UCBPP-PA14).